The sequence spans 689 residues: Glycine--tRNA ligase beta subunit (689 aa).

This sequence belongs to the class-II aminoacyl-tRNA synthetase family. As to quaternary structure, tetramer of two alpha and two beta subunits.

It localises to the cytoplasm. It carries out the reaction tRNA(Gly) + glycine + ATP = glycyl-tRNA(Gly) + AMP + diphosphate. The chain is Glycine--tRNA ligase beta subunit from Aeromonas hydrophila subsp. hydrophila (strain ATCC 7966 / DSM 30187 / BCRC 13018 / CCUG 14551 / JCM 1027 / KCTC 2358 / NCIMB 9240 / NCTC 8049).